Consider the following 703-residue polypeptide: Ion-translocating oxidoreductase complex subunit C (703 aa).

4Fe-4S ferredoxin-type domains lie at 368–397 (MAPQEQEQSCIRCGLCVDACPAGLLPQQLY) and 407–436 (KARNHNLFDCIECGACAFVCPSNIPLVQYY). [4Fe-4S] cluster is bound by residues cysteine 377, cysteine 380, cysteine 383, cysteine 387, cysteine 416, cysteine 419, cysteine 422, and cysteine 426. Disordered stretches follow at residues 505–558 (AVPA…EDPR) and 653–674 (AQQATAVETPAESPAVVTEEDP). Over residues 524–539 (AAREARKAQARERRAQ) the composition is skewed to basic and acidic residues.

Belongs to the 4Fe4S bacterial-type ferredoxin family. RnfC subfamily. In terms of assembly, the complex is composed of six subunits: RnfA, RnfB, RnfC, RnfD, RnfE and RnfG. Requires [4Fe-4S] cluster as cofactor.

The protein localises to the cell inner membrane. In terms of biological role, part of a membrane-bound complex that couples electron transfer with translocation of ions across the membrane. This is Ion-translocating oxidoreductase complex subunit C from Serratia proteamaculans (strain 568).